Here is a 200-residue protein sequence, read N- to C-terminus: Recombination protein RecR (200 aa).

Residues 58–73 form a C4-type zinc finger; that stretch reads CSICGNITEDDPCPIC. One can recognise a Toprim domain in the interval 81 to 177; that stretch reads SQILVVEQSQ…KVTRLAHGLS (97 aa).

This sequence belongs to the RecR family.

May play a role in DNA repair. It seems to be involved in an RecBC-independent recombinational process of DNA repair. It may act with RecF and RecO. The chain is Recombination protein RecR from Limosilactobacillus reuteri (strain DSM 20016) (Lactobacillus reuteri).